A 393-amino-acid polypeptide reads, in one-letter code: Messenger RNA-binding inhibitor of apoptosis 1 (393 aa).

The segment at glutamate 12–lysine 76 is KH 1-like. Residues valine 79–phenylalanine 157 form a KH 2-like region. The KH 3-like stretch occupies residues glutamate 259 to asparagine 322. Positions methionine 328–aspartate 393 are disordered. The span at serine 345–threonine 359 shows a compositional bias: low complexity.

In terms of assembly, may interact with wago-4. In terms of tissue distribution, expressed throughout the germline and in oocytes (at protein level).

The protein resides in the cytoplasm. The protein localises to the perinuclear region. Its function is as follows. RNA-binding protein which binds to its own mRNA and target mRNAs to negatively regulate gene expression to modulate apoptosis and differentiation in the germline. Negatively regulates the expression of the argonaute protein wago-4, and may thus play a role in RNA-mediated gene silencing (RNAi) in the germline. The sequence is that of Messenger RNA-binding inhibitor of apoptosis 1 from Caenorhabditis elegans.